Reading from the N-terminus, the 487-residue chain is MMSKLDNQQLAKIRTMVPEMRRVERIHFVGIGGAGMSGIAEVLLNEGYRISGSDLAPNAVTDSLTQKGAEIFFGHAAENVNGASVVVVSTAIAQDNPELVAARELRIPVVRRAEMLAELMRYRHGIAIAGTHGKTTTTALMTQIYFEAGLDPTFVNGGLVKSAGTNARLGCSRYLIAEADESDASFLHLQPMVSVVTNIEADHMDTYGGDFEVLKQTFIDFLHNLPFYGLAVMCVDDPVVRELLPRIGRQIITYGFSDDADVRIVEYGQHAHQGHFTILRAGKPDLNVKLNIPGKHNALNATAAVAVATEEGVDDDAIIRALLEFEGTGRRFDHLGEFETGNGSVMLVDDYGHHPSEVDVTIQAARAGWEKKRLVMIFQPHRYSRTRDLYEDFAHVLEQVDVLLMLDVYSAGEVAIPGADGRSLCRTIRGRGKIDPIFVPTHEDLPSVLANILQNDDLLLTQGAGDVGKIARQLADLQLDIAAMRAE.

Residue 130 to 136 (GTHGKTT) coordinates ATP.

Belongs to the MurCDEF family.

Its subcellular location is the cytoplasm. It carries out the reaction UDP-N-acetyl-alpha-D-muramate + L-alanine + ATP = UDP-N-acetyl-alpha-D-muramoyl-L-alanine + ADP + phosphate + H(+). It participates in cell wall biogenesis; peptidoglycan biosynthesis. In terms of biological role, cell wall formation. The protein is UDP-N-acetylmuramate--L-alanine ligase of Photobacterium profundum (strain SS9).